The chain runs to 162 residues: Ribosome maturation factor RimP (162 aa).

The protein belongs to the RimP family.

The protein localises to the cytoplasm. In terms of biological role, required for maturation of 30S ribosomal subunits. The sequence is that of Ribosome maturation factor RimP from Leptospira biflexa serovar Patoc (strain Patoc 1 / Ames).